The following is a 146-amino-acid chain: Ankyrin repeat-containing protein P16F5.05c (146 aa).

4 ANK repeats span residues 1–31 (MDVDDLIYACRAADEELLDEIIEKCPQELSR), 35–64 (NGNSGLHMASANGHIAVVQKIIPYLNKEVI), 70–99 (SGNTAMHWAALNGHAEICKLLLEAGGDPHI), and 103–132 (YEKSPIYEADIRNQQKVMDLFLDFEIAKGS).

It localises to the cytoplasm. The protein resides in the nucleus. The chain is Ankyrin repeat-containing protein P16F5.05c from Schizosaccharomyces pombe (strain 972 / ATCC 24843) (Fission yeast).